Consider the following 175-residue polypeptide: Calcineurin subunit B (175 aa).

EF-hand domains are found at residues 21–56, 58–88, 90–125, and 131–166; these read AEIE…SANP, AKRI…FSGR, ETDA…MVGT, and QLQQ…TEVI. 20 residues coordinate Ca(2+): Asp34, Asp36, Ser38, Ser40, Glu45, Asp66, Asp68, Ser70, Asp72, Glu77, Asp103, Asp105, Asp107, Tyr109, Glu114, Asp144, Asp146, Asp148, Lys150, and Glu155.

It belongs to the calcineurin regulatory subunit family. In terms of assembly, composed of a catalytic subunit (A) and a regulatory subunit (B).

In terms of biological role, regulatory subunit of calcineurin, a calcium-dependent, calmodulin stimulated protein phosphatase. Confers calcium sensitivity. The polypeptide is Calcineurin subunit B (CNB1) (Kluyveromyces lactis (strain ATCC 8585 / CBS 2359 / DSM 70799 / NBRC 1267 / NRRL Y-1140 / WM37) (Yeast)).